The following is a 247-amino-acid chain: UPF0259 membrane protein BUsg_265 (247 aa).

6 helical membrane-spanning segments follow: residues 20 to 40 (IKII…INVL), 82 to 102 (IFKI…IITL), 114 to 134 (IQFS…LNFI), 137 to 157 (FFIQ…SVLL), 188 to 208 (IVGT…TVFS), and 217 to 237 (FIFL…IVYL).

This sequence belongs to the UPF0259 family.

Its subcellular location is the cell membrane. The chain is UPF0259 membrane protein BUsg_265 from Buchnera aphidicola subsp. Schizaphis graminum (strain Sg).